The following is a 56-amino-acid chain: uncharacterized protein (56 aa).

This is an uncharacterized protein from Saccharolobus islandicus (Sulfolobus islandicus).